A 241-amino-acid polypeptide reads, in one-letter code: Cytochrome b6-f complex iron-sulfur subunit 2, cyanelle (241 aa).

A cyanelle-targeting transit peptide spans 1–62 (MSAFACSAVA…AAKATTFSIS (62 aa)). The chain crosses the membrane as a helical span at residues 83–103 (LLGAIAGPTIGAGGPFVSFLV). A Rieske domain is found at 127-223 (VEKWLETXKP…VNVLEDGVVA (97 aa)). [2Fe-2S] cluster is bound by residues C169, H171, C187, and H190. Cysteines 174 and 189 form a disulfide.

The protein belongs to the Rieske iron-sulfur protein family. As to quaternary structure, the 4 large subunits of the cytochrome b6-f complex are cytochrome b6, subunit IV (17 kDa polypeptide, petD), cytochrome f and the Rieske protein, while the 4 small subunits are petG, petL, petM and petN. The complex functions as a dimer. The cofactor is [2Fe-2S] cluster.

Its subcellular location is the plastid. It localises to the cyanelle thylakoid membrane. It carries out the reaction 2 oxidized [plastocyanin] + a plastoquinol + 2 H(+)(in) = 2 reduced [plastocyanin] + a plastoquinone + 4 H(+)(out). Its function is as follows. Component of the cytochrome b6-f complex, which mediates electron transfer between photosystem II (PSII) and photosystem I (PSI), cyclic electron flow around PSI, and state transitions. The protein is Cytochrome b6-f complex iron-sulfur subunit 2, cyanelle (petC-2) of Cyanophora paradoxa.